The chain runs to 466 residues: Argininosuccinate lyase (466 aa).

Belongs to the lyase 1 family. Argininosuccinate lyase subfamily.

The protein resides in the cytoplasm. The catalysed reaction is 2-(N(omega)-L-arginino)succinate = fumarate + L-arginine. It participates in amino-acid biosynthesis; L-arginine biosynthesis; L-arginine from L-ornithine and carbamoyl phosphate: step 3/3. In Bartonella tribocorum (strain CIP 105476 / IBS 506), this protein is Argininosuccinate lyase.